The following is a 228-amino-acid chain: Ribulose-phosphate 3-epimerase (228 aa).

S9 contacts substrate. Residues H34, D36, H68, and D177 each contribute to the a divalent metal cation site. The Proton acceptor role is filled by D36. Substrate contacts are provided by residues H68, 177–179, and 199–200; these read DGG and GS. D177 functions as the Proton donor in the catalytic mechanism.

Belongs to the ribulose-phosphate 3-epimerase family. A divalent metal cation is required as a cofactor.

It catalyses the reaction D-ribulose 5-phosphate = D-xylulose 5-phosphate. It functions in the pathway carbohydrate degradation. Its function is as follows. Catalyzes the reversible epimerization of D-ribulose 5-phosphate to D-xylulose 5-phosphate. This chain is Ribulose-phosphate 3-epimerase, found in Buchnera aphidicola subsp. Schizaphis graminum (strain Sg).